Here is a 426-residue protein sequence, read N- to C-terminus: Synaptotagmin-13 (426 aa).

Topologically, residues 1–6 (MVLSVP) are vesicular. A helical transmembrane segment spans residues 7-29 (VIALGATLGTATSILALCGVTCL). The Cytoplasmic portion of the chain corresponds to 30 to 426 (CRHMHPKKGL…QIAMWHQLHL (397 aa)). C2 domains follow at residues 158-275 (QAPK…AQWG) and 287-422 (GAGE…AMWH).

Belongs to the synaptotagmin family. In terms of assembly, interacts with NRXN1. Expressed in brain, pancreas and kidney.

The protein resides in the membrane. In terms of biological role, may be involved in transport vesicle docking to the plasma membrane. The polypeptide is Synaptotagmin-13 (SYT13) (Homo sapiens (Human)).